A 548-amino-acid polypeptide reads, in one-letter code: Glutamyl-tRNA(Gln) amidotransferase subunit B, chloroplastic/mitochondrial (548 aa).

It belongs to the GatB/GatE family. GatB subfamily. In terms of assembly, subunit of the heterotrimeric GatCAB amidotransferase (AdT) complex, composed of A, B and C subunits.

It is found in the mitochondrion. Its subcellular location is the plastid. It localises to the chloroplast. It catalyses the reaction L-glutamyl-tRNA(Gln) + L-glutamine + ATP + H2O = L-glutaminyl-tRNA(Gln) + L-glutamate + ADP + phosphate + H(+). Functionally, allows the formation of correctly charged Gln-tRNA(Gln) through the transamidation of misacylated Glu-tRNA(Gln) in chloroplasts and mitochondria. The reaction takes place in the presence of glutamine and ATP through an activated gamma-phospho-Glu-tRNA(Gln). This chain is Glutamyl-tRNA(Gln) amidotransferase subunit B, chloroplastic/mitochondrial, found in Sorghum bicolor (Sorghum).